Here is a 346-residue protein sequence, read N- to C-terminus: Phosphoribosylformylglycinamidine cyclo-ligase (346 aa).

It belongs to the AIR synthase family.

The protein localises to the cytoplasm. It catalyses the reaction 2-formamido-N(1)-(5-O-phospho-beta-D-ribosyl)acetamidine + ATP = 5-amino-1-(5-phospho-beta-D-ribosyl)imidazole + ADP + phosphate + H(+). Its pathway is purine metabolism; IMP biosynthesis via de novo pathway; 5-amino-1-(5-phospho-D-ribosyl)imidazole from N(2)-formyl-N(1)-(5-phospho-D-ribosyl)glycinamide: step 2/2. The sequence is that of Phosphoribosylformylglycinamidine cyclo-ligase from Photorhabdus laumondii subsp. laumondii (strain DSM 15139 / CIP 105565 / TT01) (Photorhabdus luminescens subsp. laumondii).